A 427-amino-acid polypeptide reads, in one-letter code: Glutamate-1-semialdehyde 2,1-aminomutase (427 aa).

The residue at position 267 (K267) is an N6-(pyridoxal phosphate)lysine.

Belongs to the class-III pyridoxal-phosphate-dependent aminotransferase family. HemL subfamily. In terms of assembly, homodimer. Pyridoxal 5'-phosphate is required as a cofactor.

It localises to the cytoplasm. It catalyses the reaction (S)-4-amino-5-oxopentanoate = 5-aminolevulinate. The protein operates within porphyrin-containing compound metabolism; protoporphyrin-IX biosynthesis; 5-aminolevulinate from L-glutamyl-tRNA(Glu): step 2/2. This Thermodesulfovibrio yellowstonii (strain ATCC 51303 / DSM 11347 / YP87) protein is Glutamate-1-semialdehyde 2,1-aminomutase.